The sequence spans 452 residues: Cytochrome b-c1 complex subunit 2, mitochondrial (452 aa).

A mitochondrion-targeting transit peptide spans 1-14 (MKLLSRAGSFSRFY). An N6-acetyllysine mark is found at K65, K198, and K249. A Phosphoserine modification is found at S367.

The protein belongs to the peptidase M16 family. UQCRC2/QCR2 subfamily. In terms of assembly, component of the ubiquinol-cytochrome c oxidoreductase (cytochrome b-c1 complex, complex III, CIII), a multisubunit enzyme composed of 11 subunits. The complex is composed of 3 respiratory subunits cytochrome b, cytochrome c1 and Rieske protein UQCRFS1, 2 core protein subunits UQCRC1/QCR1 and UQCRC2/QCR2, and 6 low-molecular weight protein subunits UQCRH/QCR6, UQCRB/QCR7, UQCRQ/QCR8, UQCR10/QCR9, UQCR11/QCR10 and subunit 9, the cleavage product of Rieske protein UQCRFS1. The complex exists as an obligatory dimer and forms supercomplexes (SCs) in the inner mitochondrial membrane with NADH-ubiquinone oxidoreductase (complex I, CI) and cytochrome c oxidase (complex IV, CIV), resulting in different assemblies (supercomplex SCI(1)III(2)IV(1) and megacomplex MCI(2)III(2)IV(2)). Interacts with RAB5IF. Interacts with STMP1. Expressed in the head region and flagellum of epididymal sperm.

It localises to the mitochondrion inner membrane. Functionally, component of the ubiquinol-cytochrome c oxidoreductase, a multisubunit transmembrane complex that is part of the mitochondrial electron transport chain which drives oxidative phosphorylation. The respiratory chain contains 3 multisubunit complexes succinate dehydrogenase (complex II, CII), ubiquinol-cytochrome c oxidoreductase (cytochrome b-c1 complex, complex III, CIII) and cytochrome c oxidase (complex IV, CIV), that cooperate to transfer electrons derived from NADH and succinate to molecular oxygen, creating an electrochemical gradient over the inner membrane that drives transmembrane transport and the ATP synthase. The cytochrome b-c1 complex catalyzes electron transfer from ubiquinol to cytochrome c, linking this redox reaction to translocation of protons across the mitochondrial inner membrane, with protons being carried across the membrane as hydrogens on the quinol. In the process called Q cycle, 2 protons are consumed from the matrix, 4 protons are released into the intermembrane space and 2 electrons are passed to cytochrome c. The 2 core subunits UQCRC1/QCR1 and UQCRC2/QCR2 are homologous to the 2 mitochondrial-processing peptidase (MPP) subunits beta-MPP and alpha-MPP respectively, and they seem to have preserved their MPP processing properties. May be involved in the in situ processing of UQCRFS1 into the mature Rieske protein and its mitochondrial targeting sequence (MTS)/subunit 9 when incorporated into complex III. This Rattus norvegicus (Rat) protein is Cytochrome b-c1 complex subunit 2, mitochondrial (Uqcrc2).